The following is a 357-amino-acid chain: Anthranilate phosphoribosyltransferase (357 aa).

Residues glycine 91, 94–95, threonine 99, 101–104, 119–127, and serine 131 each bind 5-phospho-alpha-D-ribose 1-diphosphate; these read GD, NIST, and KHGNRSVSS. Glycine 91 is an anthranilate binding site. Serine 103 provides a ligand contact to Mg(2+). Residue asparagine 122 participates in anthranilate binding. Arginine 177 provides a ligand contact to anthranilate. Mg(2+)-binding residues include aspartate 235 and glutamate 236.

Belongs to the anthranilate phosphoribosyltransferase family. In terms of assembly, homodimer. Mg(2+) serves as cofactor.

The enzyme catalyses N-(5-phospho-beta-D-ribosyl)anthranilate + diphosphate = 5-phospho-alpha-D-ribose 1-diphosphate + anthranilate. The protein operates within amino-acid biosynthesis; L-tryptophan biosynthesis; L-tryptophan from chorismate: step 2/5. In terms of biological role, catalyzes the transfer of the phosphoribosyl group of 5-phosphorylribose-1-pyrophosphate (PRPP) to anthranilate to yield N-(5'-phosphoribosyl)-anthranilate (PRA). This chain is Anthranilate phosphoribosyltransferase, found in Shewanella baltica (strain OS185).